The chain runs to 58 residues: MPSVKVRVGEPVDRALRILKKKVDKEGILKAAKAHRFYDKPSVKKRAKSKAAAKYRSR.

A disordered region spans residues 39-58 (DKPSVKKRAKSKAAAKYRSR). A compositionally biased stretch (basic residues) spans 43-58 (VKKRAKSKAAAKYRSR).

Belongs to the bacterial ribosomal protein bS21 family.

This is Small ribosomal subunit protein bS21 from Chlamydia abortus (strain DSM 27085 / S26/3) (Chlamydophila abortus).